The sequence spans 500 residues: MEAEDIQEELTCPICLDYFQDPVSIECGHNFCRGCLHRNWAPGGGPFPCPECRHPSAPAALRPNWALARLTEKTQRRRLGPVPPGLCGRHWEPLRLFCEDDQRPVCLVCRESQEHQTHAMAPIDEAFESYRTGNFDIHVDEWKRRLIRLLLYHFKQEEKLLKSQRNLVAKMKKVMHLQDVEVKNATQWKDKIKSQRMRISTEFSKLHNFLVEEEDLFLQRLNKEEEETKKKLNENTLKLNQTIASLKKLILEVGEKSQAPTLELLQNPKEVLTRSEIQDVNYSLEAVKVKTVCQIPLMKEMLKRFQVAVNLAEDTAHPKLVFSQEGRYVKNTASASSWPVFSSAWNYFAGWRNPQKTAFVERFQHLPCVLGKNVFTSGKHYWEVESRDSLEVAVGVCREDVMGITDRSKMSPDVGIWAIYWSAAGYWPLIGFPGTPTQQEPALHRVGVYLDRGTGNVSFYSAVDGVHLHTFSCSSVSRLRPFFWLSPLASLVIPPVTDRK.

The RING-type zinc finger occupies 12-53 (CPICLDYFQDPVSIECGHNFCRGCLHRNWAPGGGPFPCPECR). The segment at 82 to 123 (VPPGLCGRHWEPLRLFCEDDQRPVCLVCRESQEHQTHAMAPI) adopts a B box-type zinc-finger fold. Residues cysteine 87, histidine 90, cysteine 109, and histidine 115 each coordinate Zn(2+). The stretch at 212 to 253 (EEEDLFLQRLNKEEEETKKKLNENTLKLNQTIASLKKLILEV) forms a coiled coil. The B30.2/SPRY domain maps to 288-500 (KVKTVCQIPL…LVIPPVTDRK (213 aa)).

The protein belongs to the TRIM/RBCC family. Homotrimer.

It localises to the cytoplasm. It catalyses the reaction S-ubiquitinyl-[E2 ubiquitin-conjugating enzyme]-L-cysteine + [acceptor protein]-L-lysine = [E2 ubiquitin-conjugating enzyme]-L-cysteine + N(6)-ubiquitinyl-[acceptor protein]-L-lysine.. It functions in the pathway protein modification; protein ubiquitination. In terms of biological role, E3 ubiquitin-protein ligase. Mediates 'Lys-63'-linked polyubiquitination of the innate immune receptor RIGI, this linkage doesn't lead to proteasomal degradation but seems to enhance IFN induction. This Homo sapiens (Human) protein is E3 ubiquitin-protein ligase TRIM4 (TRIM4).